The chain runs to 355 residues: GTPase Obg (355 aa).

The 159-residue stretch at 1 to 159 (MKFLDEAKVY…KTIWLRLKLI (159 aa)) folds into the Obg domain. The 168-residue stretch at 160-327 (ADAGLVGLPN…ALRALRDIIV (168 aa)) folds into the OBG-type G domain. Residues 166-173 (GLPNAGKS), 191-195 (FTTLH), 212-215 (DIPG), 279-282 (SQID), and 308-310 (SAA) contribute to the GTP site. The Mg(2+) site is built by Ser173 and Thr193. The disordered stretch occupies residues 333–355 (GDTALPDRSMPHESEVEEEDDRL).

This sequence belongs to the TRAFAC class OBG-HflX-like GTPase superfamily. OBG GTPase family. In terms of assembly, monomer. Mg(2+) is required as a cofactor.

The protein localises to the cytoplasm. An essential GTPase which binds GTP, GDP and possibly (p)ppGpp with moderate affinity, with high nucleotide exchange rates and a fairly low GTP hydrolysis rate. Plays a role in control of the cell cycle, stress response, ribosome biogenesis and in those bacteria that undergo differentiation, in morphogenesis control. The protein is GTPase Obg of Agrobacterium fabrum (strain C58 / ATCC 33970) (Agrobacterium tumefaciens (strain C58)).